A 397-amino-acid chain; its full sequence is Purine nucleoside transport protein NupG (397 aa).

Transmembrane regions (helical) follow at residues 1–21 (MYFL…FLCS), 32–52 (IITL…TKVG), 62–82 (FFTW…PSVM), 97–117 (IIFI…PWLI), 133–153 (LESF…LAVI), 165–185 (LLTF…GSYL), 187–207 (MVPA…ALII), 242–262 (MLVG…YVAL), 282–302 (IFAY…HDAM), 335–355 (VAVA…GMIY), and 377–397 (LLVS…LFVW).

The protein belongs to the concentrative nucleoside transporter (CNT) (TC 2.A.41) family.

Its subcellular location is the cell membrane. Involved in the uptake of the purine ribonucleosides inosine and guanosine. This Bacillus subtilis (strain 168) protein is Purine nucleoside transport protein NupG (nupG).